The following is a 356-amino-acid chain: Protein RecA (356 aa).

68-75 (GQESSGKT) contacts ATP.

It belongs to the RecA family.

Its subcellular location is the cytoplasm. Its function is as follows. Can catalyze the hydrolysis of ATP in the presence of single-stranded DNA, the ATP-dependent uptake of single-stranded DNA by duplex DNA, and the ATP-dependent hybridization of homologous single-stranded DNAs. It interacts with LexA causing its activation and leading to its autocatalytic cleavage. This Thermotoga maritima (strain ATCC 43589 / DSM 3109 / JCM 10099 / NBRC 100826 / MSB8) protein is Protein RecA.